The primary structure comprises 127 residues: Fluoride-specific ion channel FluC (127 aa).

4 consecutive transmembrane segments (helical) span residues 4-24 (TLLA…QLGV), 35-55 (LGTL…LAFF), 71-91 (TGLC…IMFL), and 103-123 (VLLN…LVTW). Residues Gly75 and Thr78 each contribute to the Na(+) site.

The protein belongs to the fluoride channel Fluc/FEX (TC 1.A.43) family.

The protein localises to the cell inner membrane. The catalysed reaction is fluoride(in) = fluoride(out). Its activity is regulated as follows. Na(+) is not transported, but it plays an essential structural role and its presence is essential for fluoride channel function. Its function is as follows. Fluoride-specific ion channel. Important for reducing fluoride concentration in the cell, thus reducing its toxicity. This Pectobacterium carotovorum subsp. carotovorum (strain PC1) protein is Fluoride-specific ion channel FluC.